The chain runs to 258 residues: Exu regulon transcriptional regulator (258 aa).

One can recognise an HTH gntR-type domain in the interval R7–N75. Positions E35–I54 form a DNA-binding region, H-T-H motif.

Repressor for the exu regulon that encode genes involved in hexuronate utilization. It regulates the ExuT, UxaCA and UxuRAB operons. Binds D-tagaturonate and D-fructuronate as inducers. The sequence is that of Exu regulon transcriptional regulator (exuR) from Escherichia coli O157:H7.